Reading from the N-terminus, the 160-residue chain is Small ribosomal subunit protein uS17z (160 aa).

The protein belongs to the universal ribosomal protein uS17 family.

The protein localises to the cytoplasm. In Arabidopsis thaliana (Mouse-ear cress), this protein is Small ribosomal subunit protein uS17z (RPS11A).